Consider the following 149-residue polypeptide: Alpha-crystallin A chain (149 aa).

Positions 28–138 (LLRGFMDSGI…SHSERPIPVS (111 aa)) constitute a sHSP domain. Zn(2+)-binding residues include H55, H76, E78, H83, H91, and H130. Residues 125–149 (NLVSSHSERPIPVSREEKPTSAPSS) are disordered. A compositionally biased stretch (basic and acidic residues) spans 130 to 143 (HSERPIPVSREEKP). S138 is a glycosylation site (O-linked (GlcNAc) serine).

It belongs to the small heat shock protein (HSP20) family. As to quaternary structure, heteropolymer composed of three CRYAA and one CRYAB subunits. Inter-subunit bridging via zinc ions enhances stability, which is crucial as there is no protein turn over in the lens. Can also form homodimers and homotetramers (dimers of dimers) which serve as the building blocks of homooligomers. Within homooligomers, the zinc-binding motif is created from residues of 3 different molecules. His-76 and Glu-78 from one molecule are ligands of the zinc ion, and His-83 and His-130 residues from additional molecules complete the site with tetrahedral coordination geometry.

The protein resides in the cytoplasm. The protein localises to the nucleus. In terms of biological role, contributes to the transparency and refractive index of the lens. May act as a chaperone, preventing aggregation of various proteins under a wide range of stress conditions. This chain is Alpha-crystallin A chain (CRYAA), found in Rana temporaria (European common frog).